The primary structure comprises 430 residues: Citrate synthase (430 aa).

Catalysis depends on residues His305 and Asp363.

This sequence belongs to the citrate synthase family. In terms of assembly, homohexamer.

The catalysed reaction is oxaloacetate + acetyl-CoA + H2O = citrate + CoA + H(+). It functions in the pathway carbohydrate metabolism; tricarboxylic acid cycle; isocitrate from oxaloacetate: step 1/2. Its activity is regulated as follows. Allosterically inhibited by NADH. The polypeptide is Citrate synthase (gltA) (Coxiella burnetii (strain RSA 493 / Nine Mile phase I)).